Reading from the N-terminus, the 425-residue chain is Lysosome-associated membrane glycoprotein 2 (425 aa).

The N-terminal stretch at 1-27 (MAPPRCPAGLALLLLLLGACGFFQSYA) is a signal peptide. Residues 28–192 (VEVDVKDASN…SKKESRCYAD (165 aa)) form a first lumenal domain region. Residues 28–389 (VEVDVKDASN…EECFADSDLN (362 aa)) are Lumenal-facing. N-linked (GlcNAc...) asparagine glycans are attached at residues Asn-37, Asn-56, Asn-62, Asn-74, Asn-100, Asn-105, Asn-120, Asn-163, Asn-170, Asn-179, Asn-206, Asn-232, Asn-239, Asn-252, Asn-276, Asn-287, Asn-298, Asn-312, Asn-320, and Asn-331. The cysteines at positions 40 and 78 are disulfide-linked. Cysteines 153 and 189 form a disulfide. The tract at residues 193-238 (TPTAAPTVLPTVANVTTASTTISPAPTTAPKPAENPVTGNYSLKTG) is hinge. The second lumenal domain stretch occupies residues 239–390 (NKTCLLATVG…ECFADSDLNF (152 aa)). An intrachain disulfide couples Cys-242 to Cys-274. A disulfide bond links Cys-345 and Cys-382. A helical membrane pass occupies residues 390–414 (FLIPVAVGMALGFLIILVFISYIIG). Residues 415-425 (RRKSRTGYQSV) are Cytoplasmic-facing. The tract at residues 416–419 (RKSR) is important for binding and subsequent lysosomal degradation of target proteins.

The protein belongs to the LAMP family. Monomer. Forms large homooligomers. In terms of processing, extensively N-glycosylated. Contains a minor proportion of O-linked glycans.

It is found in the lysosome membrane. The protein resides in the endosome membrane. It localises to the cell membrane. Its subcellular location is the cytoplasmic vesicle. The protein localises to the autophagosome membrane. Lysosomal membrane glycoprotein which plays an important role in lysosome biogenesis, lysosomal pH regulation and autophagy. Plays an important role in chaperone-mediated autophagy, a process that mediates lysosomal degradation of proteins in response to various stresses and as part of the normal turnover of proteins with a long biological half-live. In the chaperone-mediated autophagy, acts downstream of chaperones, such as HSPA8/HSC70, which recognize and bind substrate proteins and mediate their recruitment to lysosomes, where target proteins bind LAMP2. Plays a role in lysosomal protein degradation in response to starvation. Required for the fusion of autophagosomes with lysosomes during autophagy. The protein is Lysosome-associated membrane glycoprotein 2 (LAMP2) of Gallus gallus (Chicken).